Here is a 309-residue protein sequence, read N- to C-terminus: NAD-dependent protein deacylase sirtuin-5, mitochondrial (309 aa).

The N-terminal 35 residues, 1-35 (MILLPFHTRRLVSHVYCGLKPASKKKGIALEMARP), are a transit peptide targeting the mitochondrion. Residues 36–306 (SSNLADFREA…PPAIARHETE (271 aa)) enclose the Deacetylase sirtuin-type domain. 57–76 (GAGVSAESGVPTFRGAGGYW) lines the NAD(+) pocket. The substrate site is built by Y101 and R104. 139–142 (QNID) lines the NAD(+) pocket. H157 (proton acceptor) is an active-site residue. Zn(2+) contacts are provided by C165, C168, C206, and C211. NAD(+) is bound by residues 248–250 (GTS), 274–276 (NME), and C292.

This sequence belongs to the sirtuin family. Class III subfamily. It depends on Zn(2+) as a cofactor.

It localises to the mitochondrion. The protein localises to the cytoplasm. Its subcellular location is the cytosol. It is found in the nucleus. It carries out the reaction N(6)-malonyl-L-lysyl-[protein] + NAD(+) + H2O = 2''-O-malonyl-ADP-D-ribose + nicotinamide + L-lysyl-[protein]. It catalyses the reaction N(6)-succinyl-L-lysyl-[protein] + NAD(+) + H2O = 2''-O-succinyl-ADP-D-ribose + nicotinamide + L-lysyl-[protein]. The catalysed reaction is N(6)-glutaryl-L-lysyl-[protein] + NAD(+) + H2O = 2''-O-glutaryl-ADP-D-ribose + nicotinamide + L-lysyl-[protein]. In terms of biological role, NAD-dependent lysine demalonylase, desuccinylase and deglutarylase that specifically removes malonyl, succinyl and glutaryl groups on target proteins. Has weak NAD-dependent protein deacetylase activity; however this activity may not be physiologically relevant in vivo. This chain is NAD-dependent protein deacylase sirtuin-5, mitochondrial (sirt5), found in Xenopus tropicalis (Western clawed frog).